The sequence spans 28 residues: Conotoxin Cl1.2 (28 aa).

In terms of processing, contains 2 disulfide bonds. As to expression, expressed by the venom duct.

Its subcellular location is the secreted. This Californiconus californicus (California cone) protein is Conotoxin Cl1.2.